A 122-amino-acid chain; its full sequence is Serum amyloid A-3 protein (122 aa).

Positions 1–18 (MKLSIGIIFCFLILGVNS) are cleaved as a signal peptide. Positions 88–122 (GRGAEDSKADQEANQWGRSGNDPNHFRPKGLPDKY) are disordered. Residues 99-109 (EANQWGRSGND) show a composition bias toward polar residues.

It belongs to the SAA family. Expressed by the liver; secreted in plasma. Expressed in synovial fibroblasts.

Its subcellular location is the secreted. Major acute phase reactant. Apolipoprotein of the HDL complex. In vitro exhibits antimicrobial activity against Escherichia coli, Streptococcus uberis and Pseudomonas aeruginosa. In Oryctolagus cuniculus (Rabbit), this protein is Serum amyloid A-3 protein (SAA3).